A 218-amino-acid chain; its full sequence is MICIPVIDEDMSDAINSAKEALKYGDIVEFRVDLLNNVTFEDITEFSKIPSIITIRAEWEGGAWKKSNEERIELLKHAIKNNAKFVDIELKEEKNLELVKYRNEIRSNTKIIVSYHDFEKTPEIDELIDVVEKELKIGDIAKFATFANSKEDTLKILNLMNKYYGKIIAIGMGESGKLTRILGLDFGSILTFASMEGKASAPGQVDVKKLKEILELIE.

3-dehydroquinate is bound by residues 29–31 (EFR) and arginine 56. Histidine 116 functions as the Proton donor/acceptor in the catalytic mechanism. Lysine 142 functions as the Schiff-base intermediate with substrate in the catalytic mechanism. 3 residues coordinate 3-dehydroquinate: arginine 180, serine 200, and glutamine 204.

Belongs to the type-I 3-dehydroquinase family. As to quaternary structure, homodimer.

It catalyses the reaction 3-dehydroquinate = 3-dehydroshikimate + H2O. Its pathway is metabolic intermediate biosynthesis; chorismate biosynthesis; chorismate from D-erythrose 4-phosphate and phosphoenolpyruvate: step 3/7. Involved in the third step of the chorismate pathway, which leads to the biosynthesis of aromatic amino acids. Catalyzes the cis-dehydration of 3-dehydroquinate (DHQ) and introduces the first double bond of the aromatic ring to yield 3-dehydroshikimate. This is 3-dehydroquinate dehydratase from Methanococcus maripaludis (strain C5 / ATCC BAA-1333).